A 71-amino-acid chain; its full sequence is UPF0435 protein SERP1418 (71 aa).

The protein belongs to the UPF0435 family.

The chain is UPF0435 protein SERP1418 from Staphylococcus epidermidis (strain ATCC 35984 / DSM 28319 / BCRC 17069 / CCUG 31568 / BM 3577 / RP62A).